A 180-amino-acid polypeptide reads, in one-letter code: MISNAIARRYAKALVQLGAEEDAVDRFGAELGQFAALLEGNADIDSVLKSPAYRIEAKREILKDVLAKLSLSGTVSNFLQVLLDRGRISFLPQIAHSYAAFADELSGVIRPVLTSAFPLEDAQVESMKGALVKATGKKVQLSVQVEPSLIGGVITKIGDKVFDGSVRTQLNRIQDILQKG.

Belongs to the ATPase delta chain family. As to quaternary structure, F-type ATPases have 2 components, F(1) - the catalytic core - and F(0) - the membrane proton channel. F(1) has five subunits: alpha(3), beta(3), gamma(1), delta(1), epsilon(1). F(0) has three main subunits: a(1), b(2) and c(10-14). The alpha and beta chains form an alternating ring which encloses part of the gamma chain. F(1) is attached to F(0) by a central stalk formed by the gamma and epsilon chains, while a peripheral stalk is formed by the delta and b chains.

It localises to the cell inner membrane. Its function is as follows. F(1)F(0) ATP synthase produces ATP from ADP in the presence of a proton or sodium gradient. F-type ATPases consist of two structural domains, F(1) containing the extramembraneous catalytic core and F(0) containing the membrane proton channel, linked together by a central stalk and a peripheral stalk. During catalysis, ATP synthesis in the catalytic domain of F(1) is coupled via a rotary mechanism of the central stalk subunits to proton translocation. This protein is part of the stalk that links CF(0) to CF(1). It either transmits conformational changes from CF(0) to CF(1) or is implicated in proton conduction. This Geobacter metallireducens (strain ATCC 53774 / DSM 7210 / GS-15) protein is ATP synthase subunit delta.